The following is a 383-amino-acid chain: Chitinase-3-like protein 1 (383 aa).

An N-terminal signal peptide occupies residues 1–21; sequence MGLRASGTGFVVLVLLQSCAA. Positions 22-383 constitute a GH18 domain; it reads YKLICYYTSW…SAVKDVLAEV (362 aa). Cysteines 26 and 51 form a disulfide. Asn60 is a glycosylation site (N-linked (GlcNAc...) asparagine). Residues 70 to 71, 97 to 100, Tyr141, 204 to 207, and Arg263 each bind chitin; these read EW, GGWN, and LTYD. Cys300 and Cys364 are oxidised to a cystine. An important for AKT1 activation and IL8 production region spans residues 324 to 338; it reads QWVAYDDQESVKNKA. Chitin is bound at residue Trp352. Asn367 carries an N-linked (GlcNAc...) asparagine glycan.

It belongs to the glycosyl hydrolase 18 family. Monomer.

The protein resides in the secreted. Its subcellular location is the extracellular space. The protein localises to the cytoplasm. It is found in the perinuclear region. It localises to the endoplasmic reticulum. Its function is as follows. Carbohydrate-binding lectin with a preference for chitin. Has no chitinase activity. May play a role in tissue remodeling and in the capacity of cells to respond to and cope with changes in their environment. Plays a role in T-helper cell type 2 (Th2) inflammatory response and IL-13-induced inflammation, regulating allergen sensitization, inflammatory cell apoptosis, dendritic cell accumulation and M2 macrophage differentiation. Facilitates invasion of pathogenic enteric bacteria into colonic mucosa and lymphoid organs. Mediates activation of AKT1 signaling pathway and subsequent IL8 production in colonic epithelial cells. Regulates antibacterial responses in lung by contributing to macrophage bacterial killing, controlling bacterial dissemination and augmenting host tolerance. Also regulates hyperoxia-induced injury, inflammation and epithelial apoptosis in lung. This is Chitinase-3-like protein 1 (CHI3L1) from Capra hircus (Goat).